The following is a 274-amino-acid chain: Bis(5'-nucleosyl)-tetraphosphatase, symmetrical (274 aa).

The protein belongs to the Ap4A hydrolase family.

The catalysed reaction is P(1),P(4)-bis(5'-adenosyl) tetraphosphate + H2O = 2 ADP + 2 H(+). Functionally, hydrolyzes diadenosine 5',5'''-P1,P4-tetraphosphate to yield ADP. The chain is Bis(5'-nucleosyl)-tetraphosphatase, symmetrical from Shewanella baltica (strain OS223).